The primary structure comprises 461 residues: Ornithine decarboxylase (461 aa).

Lysine 69 carries the N6-(pyridoxal phosphate)lysine modification. Residues serine 200, glycine 237, and 274 to 277 each bind pyridoxal 5'-phosphate; that span reads EPGR. The residue at position 303 (serine 303) is a Phosphoserine; by CK2. Position 331-332 (331-332) interacts with substrate; it reads YD. Residue cysteine 360 is the Proton donor; shared with dimeric partner of the active site. At cysteine 360 the chain carries S-nitrosocysteine. Residue aspartate 361 coordinates substrate. Tyrosine 389 serves as a coordination point for pyridoxal 5'-phosphate.

Belongs to the Orn/Lys/Arg decarboxylase class-II family. Homodimer. Only the dimer is catalytically active, as the active sites are constructed of residues from both monomers. Requires pyridoxal 5'-phosphate as cofactor.

It carries out the reaction L-ornithine + H(+) = putrescine + CO2. The protein operates within amine and polyamine biosynthesis; putrescine biosynthesis via L-ornithine pathway; putrescine from L-ornithine: step 1/1. With respect to regulation, inhibited by antizymes (AZs) OAZ1, OAZ2 and OAZ3 in response to polyamine levels. AZs inhibit the assembly of the functional homodimer by binding to ODC monomers. Additionally, OAZ1 targets ODC monomers for ubiquitin-independent proteolytic destruction by the 26S proteasome. Catalyzes the first and rate-limiting step of polyamine biosynthesis that converts ornithine into putrescine, which is the precursor for the polyamines, spermidine and spermine. Polyamines are essential for cell proliferation and are implicated in cellular processes, ranging from DNA replication to apoptosis. The protein is Ornithine decarboxylase (ODC1) of Bos taurus (Bovine).